The sequence spans 338 residues: Palmitoyltransferase ZDHHC15 (338 aa).

At 1-20 the chain is on the cytoplasmic side; it reads MLAGCRVALPRGLRCCQRVL. The helical transmembrane segment at 21-41 threads the bilayer; it reads SWVPVVIISLVVLWSYYAYVW. Residues 42-56 are Lumenal-facing; that stretch reads ELCLVTVTNPAEKAA. The chain crosses the membrane as a helical span at residues 57–77; it reads YLLIFHTVFLLFIWTYWKAIF. The Cytoplasmic segment spans residues 78–172; that stretch reads TPPKQPTKKF…NNCIGYSNYK (95 aa). Positions 129–179 constitute a DHHC domain; sequence RFCDTCQMVKPDRCHHCSVCGMCVLKMDHHCPWVNNCIGYSNYKFFLLFLA. Zn(2+) contacts are provided by Cys-131, Cys-134, His-144, Cys-145, Cys-148, Cys-151, and His-158. The active-site S-palmitoyl cysteine intermediate is the Cys-159. Cys-165 serves as a coordination point for Zn(2+). Residues 173-193 traverse the membrane as a helical segment; sequence FFLLFLAYAMLYCLYIGCTVF. Residues 194 to 210 lie on the Lumenal side of the membrane; it reads QYFILYWTDTLSNGRAK. A helical transmembrane segment spans residues 211-234; sequence FHVLFLLFVALMFFISLMFLFGYH. The Cytoplasmic segment spans residues 235–338; the sequence is CWLVSLNRTT…TSHITVHIEK (104 aa).

Belongs to the DHHC palmitoyltransferase family. In terms of processing, autopalmitoylated (in vitro).

Its subcellular location is the golgi apparatus membrane. It is found in the postsynaptic density. It catalyses the reaction L-cysteinyl-[protein] + hexadecanoyl-CoA = S-hexadecanoyl-L-cysteinyl-[protein] + CoA. The enzyme catalyses L-cysteinyl-[protein] + tetradecanoyl-CoA = S-tetradecanoyl-L-cysteinyl-[protein] + CoA. It carries out the reaction L-cysteinyl-[protein] + octadecanoyl-CoA = S-octadecanoyl-L-cysteinyl-[protein] + CoA. Functionally, palmitoyltransferase that catalyzes the addition of palmitate onto various protein substrates. Has no stringent fatty acid selectivity and in addition to palmitate can also transfer onto target proteins myristate from tetradecanoyl-CoA and stearate from octadecanoyl-CoA. May thereby regulate target proteins association and localization to membranes. In the nervous system, probably catalyzes the palmitoylation of synaptic proteins and is involved in the differentiation of dopaminergic neurons and the development of the diencephalon. This is Palmitoyltransferase ZDHHC15 (zdhhc15) from Xenopus laevis (African clawed frog).